A 734-amino-acid chain; its full sequence is Photosystem I P700 chlorophyll a apoprotein A2 (734 aa).

The next 8 membrane-spanning stretches (helical) occupy residues I46–A69, L135–Q158, L175–I199, M273–Y291, I330–Y353, A369–I395, A417–H439, and F517–V535. C559 and C568 together coordinate [4Fe-4S] cluster. Helical transmembrane passes span A575–W596 and L643–I665. Residues H654, M662, and Y670 each coordinate chlorophyll a. W671 is a binding site for phylloquinone. A helical membrane pass occupies residues L707–A727.

The protein belongs to the PsaA/PsaB family. The PsaA/B heterodimer binds the P700 chlorophyll special pair and subsequent electron acceptors. PSI consists of a core antenna complex that captures photons, and an electron transfer chain that converts photonic excitation into a charge separation. The eukaryotic PSI reaction center is composed of at least 11 subunits. P700 is a chlorophyll a/chlorophyll a' dimer, A0 is one or more chlorophyll a, A1 is one or both phylloquinones and FX is a shared 4Fe-4S iron-sulfur center. is required as a cofactor.

Its subcellular location is the plastid. The protein localises to the chloroplast thylakoid membrane. The enzyme catalyses reduced [plastocyanin] + hnu + oxidized [2Fe-2S]-[ferredoxin] = oxidized [plastocyanin] + reduced [2Fe-2S]-[ferredoxin]. PsaA and PsaB bind P700, the primary electron donor of photosystem I (PSI), as well as the electron acceptors A0, A1 and FX. PSI is a plastocyanin-ferredoxin oxidoreductase, converting photonic excitation into a charge separation, which transfers an electron from the donor P700 chlorophyll pair to the spectroscopically characterized acceptors A0, A1, FX, FA and FB in turn. Oxidized P700 is reduced on the lumenal side of the thylakoid membrane by plastocyanin. In Hordeum vulgare (Barley), this protein is Photosystem I P700 chlorophyll a apoprotein A2.